A 1010-amino-acid chain; its full sequence is Collagen, type I, alpha 1b (1010 aa).

The segment covering Ser1–Ser24 has biased composition (pro residues). The interval Ser1–Arg969 is disordered. Residues Ser25 to Ser48 show a composition bias toward low complexity. Basic and acidic residues predominate over residues Asn58–Glu72. The span at Arg73–Arg82 shows a compositional bias: low complexity. The span at Gly145–Phe159 shows a compositional bias: pro residues. Composition is skewed to gly residues over residues Pro160–Gly179 and Gly203–Gly212. Low complexity-rich tracts occupy residues Ser213–Ala268 and Glu300–Pro310. Positions Gly311–Gly323 are enriched in gly residues. 2 stretches are compositionally biased toward low complexity: residues Glu324–Lys343 and Pro405–Glu448. Composition is skewed to gly residues over residues Gly468–Gly477, Gly486–Gly495, and Gly519–Gly528. Low complexity-rich tracts occupy residues Val559–Ala568 and Ala581–Lys596. Gly residues-rich tracts occupy residues Gly609–Gly618 and Gly633–Gly642. 3 stretches are compositionally biased toward low complexity: residues Ala643–Ala662, Glu679–Lys701, and Ala796–Lys805. Residues Lys834 to Gly847 show a composition bias toward basic and acidic residues. Low complexity predominate over residues Pro872–Pro900. The span at Ala918 to Pro933 shows a compositional bias: pro residues. The Fibrillar collagen NC1 domain maps to Arg982–Leu1010.

Belongs to the fibrillar collagen family.

The protein resides in the secreted. The protein localises to the extracellular space. Its subcellular location is the extracellular matrix. In Epinephelus marginatus (Dusky grouper), this protein is Collagen, type I, alpha 1b.